Here is a 451-residue protein sequence, read N- to C-terminus: Adenylyltransferase and sulfurtransferase MOCS3 (451 aa).

The interval 42 to 62 is disordered; the sequence is GEDSDEAEESSNDMPTPQTKL. A compositionally biased stretch (acidic residues) spans 43-52; it reads EDSDEAEESS. At Thr60 the chain carries Phosphothreonine. ATP is bound by residues Gly99, Asp120, 127-131, Lys144, and 188-189; these read SNLHR and DN. Zn(2+) is bound by residues Cys229 and Cys232. The Glycyl thioester intermediate; for adenylyltransferase activity role is filled by Cys246. Zn(2+) is bound by residues Cys304 and Cys307. The 97-residue stretch at 353 to 449 folds into the Rhodanese domain; sequence QSQPHLLLDV…WTGSVDATFP (97 aa). Residue Cys408 is the Cysteine persulfide intermediate; for sulfurtransferase activity of the active site.

The protein in the N-terminal section; belongs to the HesA/MoeB/ThiF family. UBA4 subfamily. Requires Zn(2+) as cofactor.

It is found in the cytoplasm. The protein resides in the cytosol. It catalyses the reaction [molybdopterin-synthase sulfur-carrier protein]-C-terminal Gly-Gly + ATP + H(+) = [molybdopterin-synthase sulfur-carrier protein]-C-terminal Gly-Gly-AMP + diphosphate. The catalysed reaction is [molybdopterin-synthase sulfur-carrier protein]-C-terminal Gly-Gly-AMP + S-sulfanyl-L-cysteinyl-[cysteine desulfurase] + AH2 = [molybdopterin-synthase sulfur-carrier protein]-C-terminal-Gly-aminoethanethioate + L-cysteinyl-[cysteine desulfurase] + A + AMP + 2 H(+). The protein operates within tRNA modification; 5-methoxycarbonylmethyl-2-thiouridine-tRNA biosynthesis. It functions in the pathway cofactor biosynthesis; molybdopterin biosynthesis. In terms of biological role, plays a central role in 2-thiolation of mcm(5)S(2)U at tRNA wobble positions of cytosolic tRNA(Lys), tRNA(Glu) and tRNA(Gln). Also essential during biosynthesis of the molybdenum cofactor. Acts by mediating the C-terminal thiocarboxylation of sulfur carriers URM1 and MOCS2A. Its N-terminus first activates URM1 and MOCS2A as acyl-adenylates (-COAMP), then the persulfide sulfur on the catalytic cysteine is transferred to URM1 and MOCS2A to form thiocarboxylation (-COSH) of their C-terminus. The reaction probably involves hydrogen sulfide that is generated from the persulfide intermediate and that acts as a nucleophile towards URM1 and MOCS2A. Subsequently, a transient disulfide bond is formed. Does not use thiosulfate as sulfur donor; NFS1 probably acting as a sulfur donor for thiocarboxylation reactions. This Drosophila persimilis (Fruit fly) protein is Adenylyltransferase and sulfurtransferase MOCS3.